Here is a 223-residue protein sequence, read N- to C-terminus: Small ribosomal subunit protein uS3 (223 aa).

Residues 39–107 form the KH type-2 domain; it reads VREFLHKKLA…PVQINIEEVR (69 aa).

It belongs to the universal ribosomal protein uS3 family. In terms of assembly, part of the 30S ribosomal subunit. Forms a tight complex with proteins S10 and S14.

Its function is as follows. Binds the lower part of the 30S subunit head. Binds mRNA in the 70S ribosome, positioning it for translation. The sequence is that of Small ribosomal subunit protein uS3 from Francisella tularensis subsp. mediasiatica (strain FSC147).